The primary structure comprises 544 residues: Chaperonin GroEL 2 (544 aa).

Residues 29-32 (TLGP), 86-90 (DGTTT), Gly-413, and Asp-495 contribute to the ATP site. Residues 525-544 (PEPKSNKPAGGGGGVDDYDY) are disordered. Over residues 533 to 544 (AGGGGGVDDYDY) the composition is skewed to gly residues.

It belongs to the chaperonin (HSP60) family. Forms a cylinder of 14 subunits composed of two heptameric rings stacked back-to-back. Interacts with the co-chaperonin GroES.

Its subcellular location is the cytoplasm. The enzyme catalyses ATP + H2O + a folded polypeptide = ADP + phosphate + an unfolded polypeptide.. In terms of biological role, together with its co-chaperonin GroES, plays an essential role in assisting protein folding. The GroEL-GroES system forms a nano-cage that allows encapsulation of the non-native substrate proteins and provides a physical environment optimized to promote and accelerate protein folding. In Synechococcus sp. (strain JA-3-3Ab) (Cyanobacteria bacterium Yellowstone A-Prime), this protein is Chaperonin GroEL 2.